The following is a 190-amino-acid chain: Corticoliberin (190 aa).

Positions 1-24 (MRLRLLVSVGVLLVALLPSPPCRA) are cleaved as a signal peptide. Positions 25–147 (LLSRGPIPGA…QEAPAARKRR (123 aa)) are excised as a propeptide. Disordered regions lie at residues 33-57 (GARQ…QEPQ) and 116-151 (RRPF…SQEP). An Alanine amide modification is found at A188.

The protein belongs to the sauvagine/corticotropin-releasing factor/urotensin I family. As to quaternary structure, interacts (via C-terminus) with CRFR1 (via N-terminal extracellular domain). In terms of tissue distribution, produced by the hypothalamus.

Its subcellular location is the secreted. Functionally, hormone regulating the release of corticotropin from pituitary gland. Induces NLRP6 in intestinal epithelial cells, hence may influence gut microbiota profile. This Bos taurus (Bovine) protein is Corticoliberin (CRH).